Consider the following 75-residue polypeptide: Beta-defensin 30 (75 aa).

The N-terminal stretch at 1–22 (MGSLQLTLVLFVLLSYVPPVRS) is a signal peptide. Cystine bridges form between Cys-35–Cys-62, Cys-42–Cys-56, and Cys-46–Cys-63.

The protein belongs to the beta-defensin family.

The protein localises to the secreted. Has antibacterial activity. This Mus musculus (Mouse) protein is Beta-defensin 30 (Defb30).